The primary structure comprises 194 residues: Outer-membrane lipoprotein LolB (194 aa).

Positions 1 to 18 (MKLLQHLTLIFCLLILTA) are cleaved as a signal peptide. C19 is lipidated: N-palmitoyl cysteine. C19 carries S-diacylglycerol cysteine lipidation.

Belongs to the LolB family. As to quaternary structure, monomer.

The protein resides in the cell outer membrane. Its function is as follows. Plays a critical role in the incorporation of lipoproteins in the outer membrane after they are released by the LolA protein. This chain is Outer-membrane lipoprotein LolB, found in Tolumonas auensis (strain DSM 9187 / NBRC 110442 / TA 4).